The following is a 360-amino-acid chain: Mitogen-activated protein kinase 14 (360 aa).

Serine 2 carries the N-acetylserine modification. Residue serine 2 is modified to Phosphoserine. Threonine 16 bears the Phosphothreonine mark. The Protein kinase domain occupies 24-308; sequence YQNLSPVGSG…AAQALAHAYF (285 aa). ATP is bound by residues 30–38 and lysine 53; that span reads VGSGAYGSV. Residue lysine 53 is modified to N6-acetyllysine. Aspartate 150 (proton acceptor) is an active-site residue. Position 152 is an N6-acetyllysine (lysine 152). Residue threonine 180 is modified to Phosphothreonine; by MAP2K3, MAP2K4, MAP2K6 and autocatalysis. A Phosphotyrosine; by MAP2K3, MAP2K4, MAP2K6 and autocatalysis modification is found at tyrosine 182. The residue at position 263 (threonine 263) is a Phosphothreonine. Position 323 is a phosphotyrosine; by ZAP70 (tyrosine 323).

It belongs to the protein kinase superfamily. CMGC Ser/Thr protein kinase family. MAP kinase subfamily. As to quaternary structure, component of a signaling complex containing at least AKAP13, PKN1, MAPK14, ZAK and MAP2K3. Within this complex, AKAP13 interacts directly with PKN1, which in turn recruits MAPK14, MAP2K3 and ZAK. Binds to a kinase interaction motif within the protein tyrosine phosphatase, PTPRR. This interaction retains MAPK14 in the cytoplasm and prevents nuclear accumulation. Interacts with SPAG9 and GADD45A. Interacts with CDC25B, CDC25C, DUSP1, DUSP10, DUSP16, NP60, SUPT20H and TAB1. Interacts with casein kinase II subunits CSNK2A1 and CSNK2B. Interacts with PPM1D. Interacts with CDK5RAP3; recruits PPM1D to MAPK14 and may regulate its dephosphorylation. Interacts with DUSP2; this interaction does not lead to catalytic activation of DUSP2 and dephosphrylation of MAPK14. Requires Mg(2+) as cofactor. Post-translationally, dually phosphorylated on Thr-180 and Tyr-182 by the MAP2Ks MAP2K3/MKK3, MAP2K4/MKK4 and MAP2K6/MKK6 in response to inflammatory cytokines, environmental stress or growth factors, which activates the enzyme. Dual phosphorylation can also be mediated by TAB1-mediated autophosphorylation. TCR engagement in T-cells also leads to Tyr-323 phosphorylation by ZAP70. Dephosphorylated and inactivated by DUPS1, DUSP10 and DUSP16. PPM1D also mediates dephosphorylation and inactivation of MAPK14. In terms of processing, acetylated at Lys-53 and Lys-152 by KAT2B and EP300. Acetylation at Lys-53 increases the affinity for ATP and enhances kinase activity. Lys-53 and Lys-152 are deacetylated by HDAC3. Ubiquitinated. Ubiquitination leads to degradation by the proteasome pathway.

The protein localises to the cytoplasm. The protein resides in the nucleus. It catalyses the reaction L-seryl-[protein] + ATP = O-phospho-L-seryl-[protein] + ADP + H(+). The catalysed reaction is L-threonyl-[protein] + ATP = O-phospho-L-threonyl-[protein] + ADP + H(+). Its activity is regulated as follows. Activated by cell stresses such as DNA damage, heat shock, osmotic shock, anisomycin and sodium arsenite, as well as pro-inflammatory stimuli such as bacterial lipopolysaccharide (LPS) and interleukin-1. Activation occurs through dual phosphorylation of Thr-180 and Tyr-182 by either of two dual specificity kinases, MAP2K3/MKK3 or MAP2K6/MKK6, and potentially also MAP2K4/MKK4, as well as by TAB1-mediated autophosphorylation. MAPK14 phosphorylated on both Thr-180 and Tyr-182 is 10-20-fold more active than MAPK14 phosphorylated only on Thr-180, whereas MAPK14 phosphorylated on Tyr-182 alone is inactive. whereas Thr-180 is necessary for catalysis, Tyr-182 may be required for auto-activation and substrate recognition. Phosphorylated at Tyr-323 by ZAP70 in an alternative activation pathway in response to TCR signaling in T-cells. This alternative pathway is inhibited by GADD45A. Inhibited by dual specificity phosphatases, such as DUSP1, DUSP10, and DUSP16. Specifically inhibited by the binding of pyridinyl-imidazole compounds, which are cytokine-suppressive anti-inflammatory drugs (CSAID). SB203580 is an inhibitor of MAPK14. Functionally, serine/threonine kinase which acts as an essential component of the MAP kinase signal transduction pathway. MAPK14 is one of the four p38 MAPKs which play an important role in the cascades of cellular responses evoked by extracellular stimuli such as pro-inflammatory cytokines or physical stress leading to direct activation of transcription factors. Accordingly, p38 MAPKs phosphorylate a broad range of proteins and it has been estimated that they may have approximately 200 to 300 substrates each. Some of the targets are downstream kinases which are activated through phosphorylation and further phosphorylate additional targets. RPS6KA5/MSK1 and RPS6KA4/MSK2 can directly phosphorylate and activate transcription factors such as CREB1, ATF1, the NF-kappa-B isoform RELA/NFKB3, STAT1 and STAT3, but can also phosphorylate histone H3 and the nucleosomal protein HMGN1. RPS6KA5/MSK1 and RPS6KA4/MSK2 play important roles in the rapid induction of immediate-early genes in response to stress or mitogenic stimuli, either by inducing chromatin remodeling or by recruiting the transcription machinery. On the other hand, two other kinase targets, MAPKAPK2/MK2 and MAPKAPK3/MK3, participate in the control of gene expression mostly at the post-transcriptional level, by phosphorylating ZFP36 (tristetraprolin) and ELAVL1, and by regulating EEF2K, which is important for the elongation of mRNA during translation. MKNK1/MNK1 and MKNK2/MNK2, two other kinases activated by p38 MAPKs, regulate protein synthesis by phosphorylating the initiation factor EIF4E2. MAPK14 also interacts with casein kinase II, leading to its activation through autophosphorylation and further phosphorylation of TP53/p53. In the cytoplasm, the p38 MAPK pathway is an important regulator of protein turnover. For example, CFLAR is an inhibitor of TNF-induced apoptosis whose proteasome-mediated degradation is regulated by p38 MAPK phosphorylation. In a similar way, MAPK14 phosphorylates the ubiquitin ligase SIAH2, regulating its activity towards EGLN3. MAPK14 may also inhibit the lysosomal degradation pathway of autophagy by interfering with the intracellular trafficking of the transmembrane protein ATG9. Another function of MAPK14 is to regulate the endocytosis of membrane receptors by different mechanisms that impinge on the small GTPase RAB5A. In addition, clathrin-mediated EGFR internalization induced by inflammatory cytokines and UV irradiation depends on MAPK14-mediated phosphorylation of EGFR itself as well as of RAB5A effectors. Ectodomain shedding of transmembrane proteins is regulated by p38 MAPKs as well. In response to inflammatory stimuli, p38 MAPKs phosphorylate the membrane-associated metalloprotease ADAM17. Such phosphorylation is required for ADAM17-mediated ectodomain shedding of TGF-alpha family ligands, which results in the activation of EGFR signaling and cell proliferation. Another p38 MAPK substrate is FGFR1. FGFR1 can be translocated from the extracellular space into the cytosol and nucleus of target cells, and regulates processes such as rRNA synthesis and cell growth. FGFR1 translocation requires p38 MAPK activation. In the nucleus, many transcription factors are phosphorylated and activated by p38 MAPKs in response to different stimuli. Classical examples include ATF1, ATF2, ATF6, ELK1, PTPRH, DDIT3, TP53/p53 and MEF2C and MEF2A. The p38 MAPKs are emerging as important modulators of gene expression by regulating chromatin modifiers and remodelers. The promoters of several genes involved in the inflammatory response, such as IL6, IL8 and IL12B, display a p38 MAPK-dependent enrichment of histone H3 phosphorylation on 'Ser-10' (H3S10ph) in LPS-stimulated myeloid cells. This phosphorylation enhances the accessibility of the cryptic NF-kappa-B-binding sites marking promoters for increased NF-kappa-B recruitment. Phosphorylates CDC25B and CDC25C which is required for binding to 14-3-3 proteins and leads to initiation of a G2 delay after ultraviolet radiation. Phosphorylates TIAR following DNA damage, releasing TIAR from GADD45A mRNA and preventing mRNA degradation. The p38 MAPKs may also have kinase-independent roles, which are thought to be due to the binding to targets in the absence of phosphorylation. Protein O-Glc-N-acylation catalyzed by the OGT is regulated by MAPK14, and, although OGT does not seem to be phosphorylated by MAPK14, their interaction increases upon MAPK14 activation induced by glucose deprivation. This interaction may regulate OGT activity by recruiting it to specific targets such as neurofilament H, stimulating its O-Glc-N-acylation. Required in mid-fetal development for the growth of embryo-derived blood vessels in the labyrinth layer of the placenta. Also plays an essential role in developmental and stress-induced erythropoiesis, through regulation of EPO gene expression. Phosphorylates S100A9 at 'Thr-113'. This Pan troglodytes (Chimpanzee) protein is Mitogen-activated protein kinase 14.